The chain runs to 232 residues: Large ribosomal subunit protein uL3 (232 aa).

The protein belongs to the universal ribosomal protein uL3 family. Part of the 50S ribosomal subunit. Forms a cluster with proteins L14 and L19.

In terms of biological role, one of the primary rRNA binding proteins, it binds directly near the 3'-end of the 23S rRNA, where it nucleates assembly of the 50S subunit. This chain is Large ribosomal subunit protein uL3, found in Hydrogenobaculum sp. (strain Y04AAS1).